Reading from the N-terminus, the 666-residue chain is Vicilin-like antimicrobial peptides 2-1 (666 aa).

Positions 1–27 are cleaved as a signal peptide; it reads MAINTSNLCSLLFLLSLFLLSTTVSLA. Disordered regions lie at residues 161-191 and 219-254; these read QQKRYEEQQREDEEKYEERMKEEDNKRDPQQ and QQRQHGRGGDMMNPQRGGSGRYEEGEEEQSDNPYYF. 2 consecutive Cupin type-1 domains span residues 271-410 and 455-625; these read SVLE…EKLR and YNLF…KEVE. The segment at 629–655 is disordered; sequence NSQDQSIFFPGPRQHQQQSPRSTKQQQ. Low complexity predominate over residues 642 to 655; that stretch reads QHQQQSPRSTKQQQ.

It belongs to the 7S seed storage protein family.

It is found in the secreted. Its function is as follows. Antimicrobial peptides 2b, 2c and 2d have antibacterial and antifungal activity against a range of species. The polypeptide is Vicilin-like antimicrobial peptides 2-1 (Macadamia integrifolia (Macadamia nut)).